A 284-amino-acid polypeptide reads, in one-letter code: Formamidopyrimidine-DNA glycosylase (284 aa).

The active-site Schiff-base intermediate with DNA is the Pro2. Glu3 (proton donor) is an active-site residue. The active-site Proton donor; for beta-elimination activity is Lys58. 3 residues coordinate DNA: His97, Arg120, and Arg165. The segment at Phe250–His284 adopts an FPG-type zinc-finger fold. Residue Arg274 is the Proton donor; for delta-elimination activity of the active site.

It belongs to the FPG family. Monomer. Requires Zn(2+) as cofactor.

It catalyses the reaction Hydrolysis of DNA containing ring-opened 7-methylguanine residues, releasing 2,6-diamino-4-hydroxy-5-(N-methyl)formamidopyrimidine.. The catalysed reaction is 2'-deoxyribonucleotide-(2'-deoxyribose 5'-phosphate)-2'-deoxyribonucleotide-DNA = a 3'-end 2'-deoxyribonucleotide-(2,3-dehydro-2,3-deoxyribose 5'-phosphate)-DNA + a 5'-end 5'-phospho-2'-deoxyribonucleoside-DNA + H(+). Its function is as follows. Involved in base excision repair of DNA damaged by oxidation or by mutagenic agents. Acts as a DNA glycosylase that recognizes and removes damaged bases. Has a preference for oxidized purines, such as 7,8-dihydro-8-oxoguanine (8-oxoG). Has AP (apurinic/apyrimidinic) lyase activity and introduces nicks in the DNA strand. Cleaves the DNA backbone by beta-delta elimination to generate a single-strand break at the site of the removed base with both 3'- and 5'-phosphates. This is Formamidopyrimidine-DNA glycosylase from Cupriavidus pinatubonensis (strain JMP 134 / LMG 1197) (Cupriavidus necator (strain JMP 134)).